The following is a 1339-amino-acid chain: Retrotransposon Gag-like protein 9 (1339 aa).

3 stretches are compositionally biased toward polar residues: residues 533–545 (TVPTSGSVSTQKT), 679–693 (SGTKSTSQMTATTSG), and 700–711 (TRLSGPGATSTP). Disordered stretches follow at residues 533-555 (TVPTSGSVSTQKTRAPVSGPMST), 679-711 (SGTKSTSQMTATTSGGIFMPQTRLSGPGATSTP), 845-864 (GVMSIPLTRTPASRAKSRPQ), 880-901 (PATAGISPSPVRSPASSTLSTL), 982-1010 (ATSLPQPRNAASGVIANPPQRAPASGAGS), and 1078-1116 (ATDSGEASTSHTRFTAPGSKSTPHMTSTAPEMKTPPPKE). Positions 891–901 (RSPASSTLSTL) are enriched in low complexity. The segment covering 1078 to 1106 (ATDSGEASTSHTRFTAPGSKSTPHMTSTA) has biased composition (polar residues).

The chain is Retrotransposon Gag-like protein 9 from Mus musculus (Mouse).